We begin with the raw amino-acid sequence, 591 residues long: Aspartate--tRNA(Asp/Asn) ligase (591 aa).

Glu176 is a binding site for L-aspartate. The tract at residues 200-203 is aspartate; the sequence is QLFK. Arg222 serves as a coordination point for L-aspartate. ATP is bound by residues 222 to 224 and Gln231; that span reads RDE. His450 contributes to the L-aspartate binding site. ATP is bound at residue Glu484. Arg491 lines the L-aspartate pocket. 536–539 is an ATP binding site; sequence GLDR.

It belongs to the class-II aminoacyl-tRNA synthetase family. Type 1 subfamily. As to quaternary structure, homodimer.

The protein localises to the cytoplasm. The enzyme catalyses tRNA(Asx) + L-aspartate + ATP = L-aspartyl-tRNA(Asx) + AMP + diphosphate. Functionally, aspartyl-tRNA synthetase with relaxed tRNA specificity since it is able to aspartylate not only its cognate tRNA(Asp) but also tRNA(Asn). Reaction proceeds in two steps: L-aspartate is first activated by ATP to form Asp-AMP and then transferred to the acceptor end of tRNA(Asp/Asn). This Bacillus mycoides (strain KBAB4) (Bacillus weihenstephanensis) protein is Aspartate--tRNA(Asp/Asn) ligase.